The primary structure comprises 369 residues: MSASPKKVIVGMSGGVDSSVSAWLLQQQGYQVEGLFMKNWEEDDGEEYCTAAADLADAQAVCDKLGIELHTVNFAAEYWDNVFELFLEEYKAGRTPNPDILCNKEIKFKAFLEFAAEDLGADFIATGHYVRRADVDGKSQLLRGLDGNKDQSYFLYTLGHDQIVQSLFPVGELEKPEVRKIAENLDLITAKKKDSTGICFIGERKFREFLGRYLPAQPGKIITVDGDDVGEHQGLMYHTLGQRKGLGIGGTKEGSEEPWYVVDKDVENNILVVAQGHEHPRLMSVGLIAQQLHWVDREPFTGTLRCTVKTRYRQTDIPCTVTALDEERVEVRFDEPVSAVTPGQSAVFYSGEICLGGGIIEQRLPLAAV.

Residues 11–18 (GMSGGVDS) and M37 contribute to the ATP site. The segment at 97 to 99 (NPD) is interaction with target base in tRNA. C102 acts as the Nucleophile in catalysis. C102 and C199 are joined by a disulfide. G127 serves as a coordination point for ATP. Residues 149–151 (KDQ) form an interaction with tRNA region. Residue C199 is the Cysteine persulfide intermediate of the active site. The tract at residues 311-312 (RY) is interaction with tRNA.

The protein belongs to the MnmA/TRMU family. As to quaternary structure, interacts with TusE.

It is found in the cytoplasm. The catalysed reaction is S-sulfanyl-L-cysteinyl-[protein] + uridine(34) in tRNA + AH2 + ATP = 2-thiouridine(34) in tRNA + L-cysteinyl-[protein] + A + AMP + diphosphate + H(+). Its function is as follows. Catalyzes the 2-thiolation of uridine at the wobble position (U34) of tRNA(Lys), tRNA(Glu) and tRNA(Gln), leading to the formation of s(2)U34, the first step of tRNA-mnm(5)s(2)U34 synthesis. Sulfur is provided by IscS, via a sulfur-relay system. Binds ATP and its substrate tRNAs. This Enterobacter sp. (strain 638) protein is tRNA-specific 2-thiouridylase MnmA.